The sequence spans 718 residues: MVRKHGWQLPAHKFQVVAITVFCLLSVAYYAFFAPFVGGRIWEYILLGVYSPVALIVFVLYVRCTAINPADPGIMSKFERGASRGGDLPTAKDISRKFDETGSHLQSSPSVASRTSTLPNSSVKGSVGDAQRVEAAKRKSCFNPLAICCGVFVYEDCRSKEETDEQQGDREEALFCTLCNAEVRKFSKHCRSCDKCVDCFDHHCRWLNNCVGRKNYMTFISLMAVSLLWLLIEAGVGIAVIVRVFVNKKDMETEIVNRLGNGFSRAPFATVVGLCTAVSMLALFPLGELFFFHMLLIKKGITTYEYVVAMRAMSEAPAGASIDEEIPNVLYSPSGSATTGFSGGSSLGLPYKGAWCTPPRVFVDYQDEVIPHLDPRMVPSTVDPDAAETAERGNKIPKRPVKISAWKLAKLNSNEATRAAARARASSSVLRPIENRHLHDDELSSRSGTISVVSSVSTEANGATLSREIRNNDPMLSHCRNSYAPSQGSRDEYDTGTHSMSSLSSPSHVHETVTLSPLPQHHTAGHRFTAAAASNSSRPPLNQATNHMIHSTFDEKIMQKGNHADPLLLPAPAASLLRDVRRTSVVWDQEAGRYISVPATTSEPRTRFSSQNQPIPSSHMGNTQNPRPVGHPPQDSSSGRAPPPTQQQQGERLMYTGESIFFGGPLVNIPNRDGLRHDGDSGREGQDRMTLTLPREARFKRDTTSNQLPVFAPVGTRK.

The next 2 membrane-spanning stretches (helical) occupy residues 16–36 (VVAITVFCLLSVAYYAFFAPF) and 41–61 (IWEYILLGVYSPVALIVFVLY). A disordered region spans residues 100 to 125 (ETGSHLQSSPSVASRTSTLPNSSVKG). Residues 103–124 (SHLQSSPSVASRTSTLPNSSVK) are compositionally biased toward polar residues. Positions 174–224 (LFCTLCNAEVRKFSKHCRSCDKCVDCFDHHCRWLNNCVGRKNYMTFISLMA) constitute a DHHC domain. Cys-204 functions as the S-palmitoyl cysteine intermediate in the catalytic mechanism. Helical transmembrane passes span 222 to 242 (LMAVSLLWLLIEAGVGIAVIV) and 277 to 297 (AVSMLALFPLGELFFFHMLLI). Disordered regions lie at residues 454 to 511 (SSVS…HVHE), 598 to 649 (PATT…QQQQ), and 664 to 718 (GPLV…GTRK). 2 stretches are compositionally biased toward polar residues: residues 479-488 (CRNSYAPSQG) and 598-626 (PATTSEPRTRFSSQNQPIPSSHMGNTQNP). Residues 673–687 (DGLRHDGDSGREGQD) are compositionally biased toward basic and acidic residues.

It belongs to the DHHC palmitoyltransferase family.

Its subcellular location is the cell membrane. The catalysed reaction is L-cysteinyl-[protein] + hexadecanoyl-CoA = S-hexadecanoyl-L-cysteinyl-[protein] + CoA. Functionally, palmitoyl acyltransferase. The sequence is that of Probable protein S-acyltransferase 19 (PAT19) from Arabidopsis thaliana (Mouse-ear cress).